The sequence spans 420 residues: Senescence-associated protein SPA15, chloroplastic (420 aa).

Residues 1 to 68 (MAKPNGIIYS…YIATRGSSLR (68 aa)) constitute a chloroplast transit peptide. Residues 85 to 111 (EYRDSSDTSSMQGKDKDPASLGKSGTP) are disordered.

The protein belongs to the ATA15/OSA15 family. As to expression, expressed in leaves.

Its subcellular location is the plastid. It localises to the chloroplast. May be involved in the regulation of leaf senescence. This is Senescence-associated protein SPA15, chloroplastic from Ipomoea batatas (Sweet potato).